Reading from the N-terminus, the 438-residue chain is Aspartate--tRNA(Asp/Asn) ligase (438 aa).

Position 176 (Glu-176) interacts with L-aspartate. The tract at residues Gln-198 to Lys-201 is aspartate. An L-aspartate-binding site is contributed by Arg-220. ATP contacts are provided by residues Arg-220–Glu-222, Arg-228–Leu-230, and Glu-361. The Mg(2+) site is built by Glu-361 and Ser-364. L-aspartate contacts are provided by Ser-364 and Arg-368. Position 409 to 412 (Gly-409 to Arg-412) interacts with ATP.

Belongs to the class-II aminoacyl-tRNA synthetase family. Type 2 subfamily. In terms of assembly, homodimer. Requires Mg(2+) as cofactor.

The protein localises to the cytoplasm. It catalyses the reaction tRNA(Asx) + L-aspartate + ATP = L-aspartyl-tRNA(Asx) + AMP + diphosphate. Its function is as follows. Aspartyl-tRNA synthetase with relaxed tRNA specificity since it is able to aspartylate not only its cognate tRNA(Asp) but also tRNA(Asn). Reaction proceeds in two steps: L-aspartate is first activated by ATP to form Asp-AMP and then transferred to the acceptor end of tRNA(Asp/Asn). This is Aspartate--tRNA(Asp/Asn) ligase from Methanococcus maripaludis (strain DSM 14266 / JCM 13030 / NBRC 101832 / S2 / LL).